A 377-amino-acid chain; its full sequence is Porphobilinogen deaminase (377 aa).

Residue cysteine 269 is modified to S-(dipyrrolylmethanemethyl)cysteine.

This sequence belongs to the HMBS family. In terms of assembly, monomer. The cofactor is dipyrromethane.

The enzyme catalyses 4 porphobilinogen + H2O = hydroxymethylbilane + 4 NH4(+). It participates in porphyrin-containing compound metabolism; protoporphyrin-IX biosynthesis; coproporphyrinogen-III from 5-aminolevulinate: step 2/4. In terms of biological role, tetrapolymerization of the monopyrrole PBG into the hydroxymethylbilane pre-uroporphyrinogen in several discrete steps. The protein is Porphobilinogen deaminase of Micrococcus luteus (strain ATCC 4698 / DSM 20030 / JCM 1464 / CCM 169 / CCUG 5858 / IAM 1056 / NBRC 3333 / NCIMB 9278 / NCTC 2665 / VKM Ac-2230) (Micrococcus lysodeikticus).